The sequence spans 405 residues: Phosphoglycerate kinase (405 aa).

Residues 24 to 26 (DFN), Arg-40, 63 to 66 (HLGR), Arg-122, and Arg-162 each bind substrate. ATP-binding positions include Lys-212, Glu-331, and 361–364 (GGDS).

The protein belongs to the phosphoglycerate kinase family. As to quaternary structure, monomer.

The protein resides in the cytoplasm. The catalysed reaction is (2R)-3-phosphoglycerate + ATP = (2R)-3-phospho-glyceroyl phosphate + ADP. The protein operates within carbohydrate degradation; glycolysis; pyruvate from D-glyceraldehyde 3-phosphate: step 2/5. This Corynebacterium aurimucosum (strain ATCC 700975 / DSM 44827 / CIP 107346 / CN-1) (Corynebacterium nigricans) protein is Phosphoglycerate kinase.